Reading from the N-terminus, the 486-residue chain is Hematopoietic lineage cell-specific protein (486 aa).

The segment at phenylalanine 27 to aspartate 66 is involved in HAX-1 binding. Position 41 is an N6-acetyllysine (lysine 41). Cortactin repeat units lie at residues alanine 79–aspartate 115, alanine 116–aspartate 152, and tyrosine 153–aspartate 189. An N6-acetyllysine modification is found at lysine 123. A Phosphotyrosine modification is found at tyrosine 140. One copy of the Cortactin 4; truncated repeat lies at tyrosine 190–phenylalanine 212. Lysine 192 is subject to N6-acetyllysine. Position 198 is a phosphotyrosine (tyrosine 198). Tyrosine 222 is subject to Phosphotyrosine; by FGR. Positions threonine 226 to alanine 430 are disordered. 2 stretches are compositionally biased toward basic and acidic residues: residues alanine 240 to alanine 258 and glutamine 265 to arginine 276. Lysine 241 bears the N6-acetyllysine mark. Serine 275 is modified (phosphoserine). Residue threonine 330 is modified to Phosphothreonine. Serine 333 carries the phosphoserine modification. Residues valine 358 to alanine 367 show a composition bias toward low complexity. A compositionally biased stretch (acidic residues) spans proline 368–aspartate 413. Phosphotyrosine; by SYK and FES is present on residues tyrosine 388 and tyrosine 405. One can recognise an SH3 domain in the interval glycine 429–leucine 486.

As to quaternary structure, interacts (via SH2 domain) with FGR. Associates with the SH2 and SH3 domains of LCK. Binding to he LCK SH3 domain occurs constitutively, while binding to the LCK SH2 domain occurs only upon TCR stimulation. A similar binding pattern was observed with LYN, but not with FYN in which the FYN SH2 region associates upon TCR stimulation but the FYN SH3 region does not associate regardless of TCR stimulation. Directly associates with HAX1, through binding to its C-terminal region. Interacts with HS1BP3. Interacts with FES/FPS. Forms a multiprotein complex with LYN and ANKRD54. Phosphorylated by LYN, FYN and FGR after cross-linking of surface IgM on B-cells. Phosphorylation by LYN, FYN and FGR requires prior phosphorylation by SYK. Binds to LCK in vivo, and is tyrosine phosphorylated upon TCR stimulation. Phosphorylated by FES. In terms of tissue distribution, expressed only in tissues and cells of hematopoietic origin.

The protein resides in the mitochondrion. Substrate of the antigen receptor-coupled tyrosine kinase. Plays a role in antigen receptor signaling for both clonal expansion and deletion in lymphoid cells. May also be involved in the regulation of gene expression. The polypeptide is Hematopoietic lineage cell-specific protein (Hcls1) (Mus musculus (Mouse)).